The following is a 179-amino-acid chain: Large ribosomal subunit protein uL5 (179 aa).

The protein belongs to the universal ribosomal protein uL5 family. Part of the 50S ribosomal subunit; part of the 5S rRNA/L5/L18/L25 subcomplex. Contacts the 5S rRNA and the P site tRNA. Forms a bridge to the 30S subunit in the 70S ribosome.

In terms of biological role, this is one of the proteins that bind and probably mediate the attachment of the 5S RNA into the large ribosomal subunit, where it forms part of the central protuberance. In the 70S ribosome it contacts protein S13 of the 30S subunit (bridge B1b), connecting the 2 subunits; this bridge is implicated in subunit movement. Contacts the P site tRNA; the 5S rRNA and some of its associated proteins might help stabilize positioning of ribosome-bound tRNAs. This chain is Large ribosomal subunit protein uL5, found in Proteus mirabilis (strain HI4320).